A 296-amino-acid chain; its full sequence is Light-independent protochlorophyllide reductase iron-sulfur ATP-binding protein (296 aa).

The tract at residues 1–20 is disordered; it reads MTTTLSRPTDGEGSVQVQQD. Residues 39 to 44 and K68 contribute to the ATP site; that span reads GIGKST. S43 serves as a coordination point for Mg(2+). Positions 124 and 158 each coordinate [4Fe-4S] cluster. 209 to 210 provides a ligand contact to ATP; sequence NR.

Belongs to the NifH/BchL/ChlL family. Homodimer. Protochlorophyllide reductase is composed of three subunits; ChlL, ChlN and ChlB. Requires [4Fe-4S] cluster as cofactor.

The enzyme catalyses chlorophyllide a + oxidized 2[4Fe-4S]-[ferredoxin] + 2 ADP + 2 phosphate = protochlorophyllide a + reduced 2[4Fe-4S]-[ferredoxin] + 2 ATP + 2 H2O. It participates in porphyrin-containing compound metabolism; chlorophyll biosynthesis (light-independent). Component of the dark-operative protochlorophyllide reductase (DPOR) that uses Mg-ATP and reduced ferredoxin to reduce ring D of protochlorophyllide (Pchlide) to form chlorophyllide a (Chlide). This reaction is light-independent. The L component serves as a unique electron donor to the NB-component of the complex, and binds Mg-ATP. The polypeptide is Light-independent protochlorophyllide reductase iron-sulfur ATP-binding protein (Synechococcus sp. (strain CC9902)).